We begin with the raw amino-acid sequence, 100 residues long: Integration host factor subunit alpha (100 aa).

The interval 53-72 (FQLRDKPQRPGRNPKTGEEV) is disordered.

It belongs to the bacterial histone-like protein family. Heterodimer of an alpha and a beta chain.

In terms of biological role, this protein is one of the two subunits of integration host factor, a specific DNA-binding protein that functions in genetic recombination as well as in transcriptional and translational control. The sequence is that of Integration host factor subunit alpha from Neisseria meningitidis serogroup C (strain 053442).